The sequence spans 65 residues: Crotamine CRO1 (65 aa).

Residues 1–22 (MKILYLLFAFLFLAFLSEPGNA) form the signal peptide. Cystine bridges form between cysteine 26–cysteine 58, cysteine 33–cysteine 52, and cysteine 40–cysteine 59.

The protein belongs to the crotamine-myotoxin family. Monomer. Expressed by the venom gland.

It localises to the secreted. In terms of biological role, cationic peptide that possesses multiple functions. It acts as a cell-penetrating peptide (CPP), and as a potent voltage-gated potassium channel (Kv) inhibitor. It exhibits antimicrobial activities, hind limb paralysis, and severe muscle necrosis by a non-enzymatic mechanism. This chain is Crotamine CRO1 (CRO1), found in Crotalus durissus terrificus (South American rattlesnake).